The sequence spans 587 residues: tRNA (guanine(37)-N(1))-methyltransferase 2 (587 aa).

Residues Arg-360 and 430 to 431 each bind S-adenosyl-L-methionine; that span reads DA. The tract at residues 446–469 is disordered; that stretch reads ASTRSRKEDVTNKDGNHVTPTEPM. Residues 450-461 are compositionally biased toward basic and acidic residues; it reads SRKEDVTNKDGN. Asn-478 is an S-adenosyl-L-methionine binding site.

Belongs to the class I-like SAM-binding methyltransferase superfamily. TRM5/TYW2 family. In terms of assembly, monomer.

It localises to the mitochondrion matrix. The protein resides in the nucleus. Its subcellular location is the cytoplasm. It carries out the reaction guanosine(37) in tRNA + S-adenosyl-L-methionine = N(1)-methylguanosine(37) in tRNA + S-adenosyl-L-homocysteine + H(+). In terms of biological role, specifically methylates the N1 position of guanosine-37 in various cytoplasmic and mitochondrial tRNAs. Methylation is not dependent on the nature of the nucleoside 5' of the target nucleoside. This is the first step in the biosynthesis of wybutosine (yW), a modified base adjacent to the anticodon of tRNAs and required for accurate decoding. In Phaeodactylum tricornutum (strain CCAP 1055/1), this protein is tRNA (guanine(37)-N(1))-methyltransferase 2.